We begin with the raw amino-acid sequence, 25 residues long: MGGVGKTKRMRRLKRKRRKMRQRSK.

The tract at residues 1 to 25 (MGGVGKTKRMRRLKRKRRKMRQRSK) is disordered.

Belongs to the eukaryotic ribosomal protein eS32 family. Component of the small ribosomal subunit.

This is Small ribosomal subunit protein eS32 (RPL41) from Glycine max (Soybean).